A 139-amino-acid chain; its full sequence is Small ribosomal subunit protein uS11 (139 aa).

Residues 118 to 139 (EDVTPIPHDGTRPKGGRRGRRV) are disordered.

This sequence belongs to the universal ribosomal protein uS11 family. As to quaternary structure, part of the 30S ribosomal subunit.

Functionally, located on the platform of the 30S subunit. This Thermococcus sibiricus (strain DSM 12597 / MM 739) protein is Small ribosomal subunit protein uS11.